Consider the following 297-residue polypeptide: Thiosulfate sulfurtransferase (297 aa).

Lys14 carries the post-translational modification N6-acetyllysine; alternate. Lys14 carries the N6-succinyllysine; alternate modification. The Rhodanese 1 domain occupies 25–143 (VGPSLRVLDA…WLKEGHPVTS (119 aa)). An O-linked (GlcNAc) serine glycan is attached at Ser35. Ser38 is subject to Phosphoserine. Residue Lys136 is modified to N6-acetyllysine; alternate. At Lys136 the chain carries N6-succinyllysine; alternate. The hinge stretch occupies residues 144–159 (EPSRPEPAVFKATLNR). Lys163 is modified (N6-acetyllysine). The region spanning 173–288 (QSKRFQLVDS…WFRRAPPETR (116 aa)) is the Rhodanese 2 domain. Lys175 is subject to N6-acetyllysine; alternate. The residue at position 175 (Lys175) is an N6-succinyllysine; alternate. Position 187 (Arg187) interacts with substrate. Lys224 carries the N6-acetyllysine; alternate modification. N6-succinyllysine; alternate is present on Lys224. The residue at position 236 (Lys236) is an N6-acetyllysine. Lys237 carries the N6-acetyllysine; alternate modification. Lys237 is modified (N6-succinyllysine; alternate). Residue Cys248 is the Cysteine persulfide intermediate of the active site. Lys250 is a binding site for substrate.

In terms of assembly, monomer. In terms of tissue distribution, expressed in numerous tissues.

The protein localises to the mitochondrion matrix. It catalyses the reaction thiosulfate + hydrogen cyanide = thiocyanate + sulfite + 2 H(+). Its function is as follows. Together with MRPL18, acts as a mitochondrial import factor for the cytosolic 5S rRNA. Only the nascent unfolded cytoplasmic form is able to bind to the 5S rRNA. Involved in the formation of iron-sulfur complexes, cyanide detoxification or modification of sulfur-containing enzymes. Other thiol compounds, besides cyanide, can act as sulfur ion acceptors. Also has weak mercaptopyruvate sulfurtransferase (MST) activity. This chain is Thiosulfate sulfurtransferase (Tst), found in Rattus norvegicus (Rat).